The primary structure comprises 517 residues: Crotonobetaine/carnitine--CoA ligase (517 aa).

It belongs to the ATP-dependent AMP-binding enzyme family.

The enzyme catalyses 4-(trimethylamino)butanoate + ATP + CoA = 4-(trimethylamino)butanoyl-CoA + AMP + diphosphate. It carries out the reaction crotonobetaine + ATP + CoA = crotonobetainyl-CoA + AMP + diphosphate. It catalyses the reaction (R)-carnitine + ATP + CoA = (R)-carnitinyl-CoA + AMP + diphosphate. The protein operates within amine and polyamine metabolism; carnitine metabolism. In terms of biological role, catalyzes the transfer of CoA to carnitine, generating the initial carnitinyl-CoA needed for the CaiB reaction cycle. Also has activity toward crotonobetaine and gamma-butyrobetaine. The polypeptide is Crotonobetaine/carnitine--CoA ligase (Escherichia coli O9:H4 (strain HS)).